A 346-amino-acid chain; its full sequence is Short-wave-sensitive opsin 1 (346 aa).

The Extracellular portion of the chain corresponds to 1–31; the sequence is MSGEDEFYLFQNISSVGPWDGPQYHIAPVWA. Residue asparagine 12 is glycosylated (N-linked (GlcNAc...) asparagine). A helical membrane pass occupies residues 32-56; sequence FHLQAAFMGFVFFAGTPLNATVLVA. Residues 57-68 are Cytoplasmic-facing; the sequence is TLHYKKLRQPLN. A helical membrane pass occupies residues 69-94; that stretch reads YILVNVSLGGFLFCIFSVFTVFIASC. Topologically, residues 95–108 are extracellular; that stretch reads HGYFLFGRHVCALE. A disulfide bridge connects residues cysteine 105 and cysteine 182. The helical transmembrane segment at 109–128 threads the bilayer; it reads AFLGSVAGLVTGWSLAFLAF. Residues 129-147 are Cytoplasmic-facing; that stretch reads ERYLVICKPFGNIRFNSKH. The chain crosses the membrane as a helical span at residues 148-171; sequence ALTVVLITWTIGIGVSIPPFFGWS. At 172 to 197 the chain is on the extracellular side; sequence RFIPEGLQCSCGPDWYTVGTKYRSEH. A helical membrane pass occupies residues 198 to 225; the sequence is YTWFLFIFCFIIPLSLICFSYFQLLRTL. Topologically, residues 226 to 247 are cytoplasmic; sequence RAVAAQQQESATTQKAEREVSH. The chain crosses the membrane as a helical span at residues 248 to 271; that stretch reads MVVVMVGSFCLCYVPYAALAMYMV. Residues 272 to 279 lie on the Extracellular side of the membrane; it reads NNRNHGLY. Residues 280-304 traverse the membrane as a helical segment; it reads LRLVTIPAFFSKSSCVYNPIIYCFM. An N6-(retinylidene)lysine modification is found at lysine 291. Residues 305–346 are Cytoplasmic-facing; that stretch reads NKQFRACILEMVCRKPMTDESDMSGSQKTEVSTVSSSKVGPH. Residues 322-346 are disordered; sequence TDESDMSGSQKTEVSTVSSSKVGPH. Positions 330–346 are enriched in low complexity; sequence SQKTEVSTVSSSKVGPH.

The protein belongs to the G-protein coupled receptor 1 family. Opsin subfamily. In terms of processing, phosphorylated on some or all of the serine and threonine residues present in the C-terminal region. Expressed in cone photoreceptor cells.

Its subcellular location is the cell membrane. The protein localises to the photoreceptor inner segment. It localises to the cell projection. The protein resides in the cilium. It is found in the photoreceptor outer segment. Its subcellular location is the cytoplasm. The protein localises to the perinuclear region. Visual pigments are the light-absorbing molecules that mediate vision. They consist of an apoprotein, opsin, covalently linked to cis-retinal. Required for the maintenance of cone outer segment organization in the ventral retina, but not essential for the maintenance of functioning cone photoreceptors. Involved in ensuring correct abundance and localization of retinal membrane proteins. May increase spectral sensitivity in dim light. The chain is Short-wave-sensitive opsin 1 (Opn1sw) from Rattus norvegicus (Rat).